Here is a 344-residue protein sequence, read N- to C-terminus: Arginine N-succinyltransferase (344 aa).

Leu-125 serves as a coordination point for succinyl-CoA. The active-site Proton donor is the His-229.

It belongs to the arginine N-succinyltransferase family.

The catalysed reaction is succinyl-CoA + L-arginine = N(2)-succinyl-L-arginine + CoA + H(+). The protein operates within amino-acid degradation; L-arginine degradation via AST pathway; L-glutamate and succinate from L-arginine: step 1/5. In terms of biological role, catalyzes the transfer of succinyl-CoA to arginine to produce N(2)-succinylarginine. The polypeptide is Arginine N-succinyltransferase (Escherichia coli O127:H6 (strain E2348/69 / EPEC)).